The primary structure comprises 351 residues: Actin maturation protease (351 aa).

The segment covering 1–19 (MTSPCSPPLKPPISPPKTP) has biased composition (pro residues). The tract at residues 1-70 (MTSPCSPPLK…PPAATGPAPR (70 aa)) is disordered. Over residues 36–50 (LDFSALPSPPWSQQT) the composition is skewed to low complexity. The span at 51–64 (PVPPPLPLPPPPAA) shows a compositional bias: pro residues. The segment at 124–244 (SLIQEGPQCG…WAVSAGVLLG (121 aa)) is peptidase C39-like. Residue cysteine 132 is part of the active site. A Phosphoserine modification is found at serine 316.

This sequence belongs to the ACTMAP family. In terms of assembly, interacts (via N-terminus) with PFN2 isoforms IIa and IIb; the interactions may facilitate efficient cleavage of the acetylated N-terminus of immature actin. Interacts with PFN1.

Its subcellular location is the cytoplasm. The enzyme catalyses N-terminal N(alpha)-acetyl-L-methionyl-L-aspartyl-[protein] + H2O = N-terminal L-aspartyl-[protein] + N-acetyl-L-methionine. The catalysed reaction is N-terminal N(alpha)-acetyl-L-methionyl-L-glutamyl-[protein] + H2O = N-terminal L-glutamyl-[protein] + N-acetyl-L-methionine. It carries out the reaction N-terminal N(alpha)-acetyl-L-cysteinyl-L-aspartyl-[protein] + H2O = N-terminal L-aspartyl-[protein] + N-acetyl-L-cysteine. It catalyses the reaction N-terminal N(alpha)-acetyl-L-cysteinyl-L-glutamyl-[protein] + H2O = N-terminal L-glutamyl-[protein] + N-acetyl-L-cysteine. Functionally, actin maturation protease that specifically mediates the cleavage of immature acetylated N-terminal actin, thereby contributing to actin maturation. Cleaves N-terminal acetylated methionine of immature cytoplasmic beta- and gamma-actins ACTB and ACTG1 after translation. Cleaves N-terminal acetylated cysteine of muscle alpha-actins ACTA1, ACTC1 and ACTA2 after canonical removal of N-terminal methionine. The protein is Actin maturation protease of Homo sapiens (Human).